We begin with the raw amino-acid sequence, 75 residues long: Small ribosomal subunit protein bS18 (75 aa).

The protein belongs to the bacterial ribosomal protein bS18 family. In terms of assembly, part of the 30S ribosomal subunit. Forms a tight heterodimer with protein bS6.

Binds as a heterodimer with protein bS6 to the central domain of the 16S rRNA, where it helps stabilize the platform of the 30S subunit. This Buchnera aphidicola subsp. Cinara cedri (strain Cc) protein is Small ribosomal subunit protein bS18.